A 326-amino-acid chain; its full sequence is Beta-ketoacyl-[acyl-carrier-protein] synthase III 2 (326 aa).

Catalysis depends on residues cysteine 114 and histidine 251. The tract at residues 252–256 (SANAR) is ACP-binding. Asparagine 281 is an active-site residue.

This sequence belongs to the thiolase-like superfamily. FabH family. In terms of assembly, homodimer.

It is found in the cytoplasm. It catalyses the reaction malonyl-[ACP] + acetyl-CoA + H(+) = 3-oxobutanoyl-[ACP] + CO2 + CoA. It functions in the pathway lipid metabolism; fatty acid biosynthesis. Functionally, catalyzes the condensation reaction of fatty acid synthesis by the addition to an acyl acceptor of two carbons from malonyl-ACP. Catalyzes the first condensation reaction which initiates fatty acid synthesis and may therefore play a role in governing the total rate of fatty acid production. Possesses both acetoacetyl-ACP synthase and acetyl transacylase activities. Its substrate specificity determines the biosynthesis of branched-chain and/or straight-chain of fatty acids. This Staphylococcus epidermidis (strain ATCC 12228 / FDA PCI 1200) protein is Beta-ketoacyl-[acyl-carrier-protein] synthase III 2.